The sequence spans 231 residues: Cytidylate kinase (231 aa).

18 to 26 is an ATP binding site; that stretch reads GPSGTGKSS.

This sequence belongs to the cytidylate kinase family. Type 1 subfamily.

The protein resides in the cytoplasm. The enzyme catalyses CMP + ATP = CDP + ADP. It catalyses the reaction dCMP + ATP = dCDP + ADP. This Streptomyces griseus subsp. griseus (strain JCM 4626 / CBS 651.72 / NBRC 13350 / KCC S-0626 / ISP 5235) protein is Cytidylate kinase.